Here is a 215-residue protein sequence, read N- to C-terminus: Probable transaldolase (215 aa).

Lys83 acts as the Schiff-base intermediate with substrate in catalysis.

It belongs to the transaldolase family. Type 3B subfamily.

It localises to the cytoplasm. It catalyses the reaction D-sedoheptulose 7-phosphate + D-glyceraldehyde 3-phosphate = D-erythrose 4-phosphate + beta-D-fructose 6-phosphate. It participates in carbohydrate degradation; pentose phosphate pathway; D-glyceraldehyde 3-phosphate and beta-D-fructose 6-phosphate from D-ribose 5-phosphate and D-xylulose 5-phosphate (non-oxidative stage): step 2/3. Functionally, transaldolase is important for the balance of metabolites in the pentose-phosphate pathway. The polypeptide is Probable transaldolase (Clostridium kluyveri (strain NBRC 12016)).